We begin with the raw amino-acid sequence, 152 residues long: Probable flagellum biosynthesis repressor protein FlbT (152 aa).

This sequence belongs to the FlbT family.

Functionally, has a post-transcriptional repressor function in flagellum biogenesis. Associates with the 5'-UTR of fljK mRNA and promotes its degradation. The chain is Probable flagellum biosynthesis repressor protein FlbT from Brucella abortus (strain S19).